A 430-amino-acid chain; its full sequence is Asparagine--tRNA ligase (430 aa).

Belongs to the class-II aminoacyl-tRNA synthetase family. Homodimer.

The protein localises to the cytoplasm. It carries out the reaction tRNA(Asn) + L-asparagine + ATP = L-asparaginyl-tRNA(Asn) + AMP + diphosphate + H(+). In Staphylococcus aureus (strain JH1), this protein is Asparagine--tRNA ligase.